The sequence spans 183 residues: Ribosome-recycling factor (183 aa).

The protein belongs to the RRF family.

The protein localises to the cytoplasm. In terms of biological role, responsible for the release of ribosomes from messenger RNA at the termination of protein biosynthesis. May increase the efficiency of translation by recycling ribosomes from one round of translation to another. The sequence is that of Ribosome-recycling factor from Afipia carboxidovorans (strain ATCC 49405 / DSM 1227 / KCTC 32145 / OM5) (Oligotropha carboxidovorans).